The chain runs to 259 residues: Snake venom serine protease homolog rhinocerase 3 (259 aa).

An N-terminal signal peptide occupies residues 1 to 17 (VLIRVLANLLLLQLSYA). Residues 18–23 (QESSEL) constitute a propeptide that is removed on maturation. The Peptidase S1 domain maps to 24-250 (VIGGDECDIN…YTDWIEGIIA (227 aa)). Intrachain disulfides connect Cys30–Cys164, Cys51–Cys67, Cys99–Cys257, Cys143–Cys211, Cys175–Cys190, and Cys201–Cys226. Asn80 is a glycosylation site (N-linked (GlcNAc...) asparagine). The N-linked (GlcNAc...) asparagine glycan is linked to Asn252.

Belongs to the peptidase S1 family. Snake venom subfamily. In terms of tissue distribution, expressed by the venom gland.

The protein localises to the secreted. Functionally, snake venom serine protease homolog that may act in the hemostasis system of the prey. The protein is Snake venom serine protease homolog rhinocerase 3 of Bitis rhinoceros (West African gaboon viper).